A 150-amino-acid chain; its full sequence is FCS-Like Zinc finger 15 (150 aa).

Positions Asn12 to Asn28 are enriched in low complexity. Positions Asn12–Ser31 are disordered. The segment at Gly67–Ser111 adopts an FLZ-type zinc-finger fold. The segment at Ser129–Tyr150 is disordered.

This sequence belongs to the FLZ family. Interacts with KIN10 and KIN11 via its FLZ-type zinc finger domain. Interacts with KINB1 and KINB3 via its N-terminal part. Forms homodimer and heterodimer with FLZ1, FLZ2 and FLZ7 in vitro.

The protein localises to the cytoplasm. It is found in the P-body. May act as an adapter to facilitate the interaction of SnRK1 complex with effector proteins, conferring tissue- and stimulus-type specific differences in the SnRK1 regulation pathway. The chain is FCS-Like Zinc finger 15 from Arabidopsis thaliana (Mouse-ear cress).